The sequence spans 494 residues: ATP synthase subunit alpha 1 (494 aa).

This sequence belongs to the ATPase alpha/beta chains family. F-type ATPases have 2 components, CF(1) - the catalytic core - and CF(0) - the membrane proton channel. CF(1) has five subunits: alpha(3), beta(3), gamma(1), delta(1), epsilon(1). CF(0) has three main subunits: a(1), b(2) and c(9-12). The alpha and beta chains form an alternating ring which encloses part of the gamma chain. CF(1) is attached to CF(0) by a central stalk formed by the gamma and epsilon chains, while a peripheral stalk is formed by the delta and b chains.

It localises to the cell inner membrane. The enzyme catalyses ATP + H2O + 4 H(+)(in) = ADP + phosphate + 5 H(+)(out). In terms of biological role, produces ATP from ADP in the presence of a proton gradient across the membrane. The alpha chain is a regulatory subunit. The protein is ATP synthase subunit alpha 1 of Hahella chejuensis (strain KCTC 2396).